A 946-amino-acid chain; its full sequence is MTVNLTTANEFIARHIGPRQEDEQHMLASLGFDSLEALSASVIPESIKGTSVLGLEDGLSEAEALAKIKAIAGQNQLFKTYIGQGYYNCHTPSPILRNLLENPAWYTAYTPYQPEISQGRLEALLNFQTLISDLTGLPIANASLLDEATAAAEAMTFCKRLSKNKGSNAFFASIHSHPQTLDVLRTRAEPLGIDVVVGDERELTDVSAFFGALLQYPASNGDVFDYRALTERFHASNALVAVAADLLALTLLTPPGEFGADVAIGSAQRFGVPLGFGGPHAAYFSTKDAFKRDMPGRLVGVSVDRFGKPALRLAMQTREQHIRREKATSNICTAQVLLANIASMYAVYHGPKGLTQIAQRIHQLTAILAKGLTALGQKVEQEHFFDTLTLNTGANTATLHDKARAQRINLRVVDAERLGVSVDETTTQADIETLWAIFADGKALPDFAANVDSTLPAALLRQSPILSHPVFNRYHSETELMRYLRKLADKDLALDRTMIPLGSCTMKLNAASEMIPVTWAEFGALHPFAPAEQSAGYLQLTSDLEAMLCAATGYDAISLQPNAGSQGEYAGLLAIRAYHQSRGEERRDICLIPSSAHGTNPATANMAGMRVVVTACDARGNVDIEDLRAKAIEHRDHLAALMITYPSTHGVFEEGIREICGIIHDNGGQVYIDGANMNAMVGLCAPGKFGGDVSHLNLHKTFCIPHGGGGPGVGPIGVKSHLTPFLPGHAAMERKEGAVCAAPFGSASILPITWMYISMMGGAGLKRASQLAILNANYISRRLEEHYPVLYTGSNGLVAHECILDLRPLKDSSGISVDDVAKRLIDFGFHAPTMSFPVAGTLMIEPTESESKEELDRFCDAMIAIREEIRAVENGTLDKDDNPLKNAPHTAAELVGEWSHPYSREQAVYPVASLIEGKYWPPVGRVDNVFGDRNLVCACPSIESYA.

The residue at position 700 (Lys-700) is an N6-(pyridoxal phosphate)lysine.

It belongs to the GcvP family. In terms of assembly, the glycine cleavage system is composed of four proteins: P, T, L and H. Pyridoxal 5'-phosphate serves as cofactor.

The enzyme catalyses N(6)-[(R)-lipoyl]-L-lysyl-[glycine-cleavage complex H protein] + glycine + H(+) = N(6)-[(R)-S(8)-aminomethyldihydrolipoyl]-L-lysyl-[glycine-cleavage complex H protein] + CO2. Its function is as follows. The glycine cleavage system catalyzes the degradation of glycine. The P protein binds the alpha-amino group of glycine through its pyridoxal phosphate cofactor; CO(2) is released and the remaining methylamine moiety is then transferred to the lipoamide cofactor of the H protein. This Pseudomonas fluorescens (strain SBW25) protein is Glycine dehydrogenase (decarboxylating).